The sequence spans 257 residues: Global transcriptional regulator CodY (257 aa).

Residues 1–155 are GAF domain; that stretch reads MSLLSKTREL…AATVIGMEIL (155 aa). Val-22, Phe-24, Ser-43, Arg-44, Arg-45, and Lys-47 together coordinate GTP. L-isoleucine-binding residues include Arg-61, Thr-96, and Phe-98. 2 residues coordinate GTP: Glu-153 and Lys-158. A DNA-binding region (H-T-H motif) is located at residues 203-222; the sequence is ASKVADRVGITRSVIVNALR.

Belongs to the CodY family. Homodimer. Homotetramer. May form homodimers under conditions in which energy sources are sufficient (active state) and homotetramers under insufficient nutrient conditions (inactive state).

The protein resides in the cytoplasm. Its activity is regulated as follows. Activity of CodY is modulated by interaction with two types of effectors: the branched-chain amino acids (BCAAs) leucine, isoleucine and valine, which are signals of the nutritional status of the cell, and GTP, which may signal the energetic status of the cell. DNA-binding global transcriptional regulator which is involved in the adaptive response to starvation and acts by directly or indirectly controlling the expression of numerous genes in response to nutrient availability. During rapid exponential growth, CodY is highly active and represses genes whose products allow adaptation to nutrient depletion. This Staphylococcus aureus (strain Mu3 / ATCC 700698) protein is Global transcriptional regulator CodY.